The chain runs to 318 residues: Transaldolase (318 aa).

Lysine 132 serves as the catalytic Schiff-base intermediate with substrate.

The protein belongs to the transaldolase family. Type 1 subfamily. Homodimer.

The protein localises to the cytoplasm. It catalyses the reaction D-sedoheptulose 7-phosphate + D-glyceraldehyde 3-phosphate = D-erythrose 4-phosphate + beta-D-fructose 6-phosphate. Its pathway is carbohydrate degradation; pentose phosphate pathway; D-glyceraldehyde 3-phosphate and beta-D-fructose 6-phosphate from D-ribose 5-phosphate and D-xylulose 5-phosphate (non-oxidative stage): step 2/3. Its function is as follows. Transaldolase is important for the balance of metabolites in the pentose-phosphate pathway. This chain is Transaldolase, found in Allorhizobium ampelinum (strain ATCC BAA-846 / DSM 112012 / S4) (Agrobacterium vitis (strain S4)).